The primary structure comprises 144 residues: Protein cornichon homolog 1 (144 aa).

Residues 1–10 are Cytoplasmic-facing; it reads MAFTFAAFCY. The chain crosses the membrane as a helical span at residues 11–31; that stretch reads MLALLLTATLIFFAIWHIIAF. Topologically, residues 32–56 are lumenal; sequence DELKTDYKNPIDQCNTLNPLVLPEY. Residues 57 to 77 form a helical membrane-spanning segment; it reads LIHAFFCVMFLCAAEWLTLGL. Residues 78 to 122 are Cytoplasmic-facing; sequence NMPLLAYHIWRYMSRPVMSGPGLYDPTTIMNADILAYCQKEGWCK. Residues 123–143 traverse the membrane as a helical segment; sequence LAFYLLAFFYYLYGMIYVLVS. Ser144 is a topological domain (lumenal).

It belongs to the cornichon family. As to quaternary structure, interacts with AREG immature precursor and with immature TGFA, i.e. with a prosegment and lacking full N-glycosylation, but not with the fully N-glycosylated form. In the Golgi apparatus, may form a complex with GORASP55 and transmembrane TGFA.

The protein localises to the endoplasmic reticulum membrane. Its subcellular location is the golgi apparatus membrane. Functionally, involved in the selective transport and maturation of TGF-alpha family proteins. The protein is Protein cornichon homolog 1 (CNIH1) of Pongo abelii (Sumatran orangutan).